The chain runs to 215 residues: Pyridoxine/pyridoxamine 5'-phosphate oxidase (215 aa).

Residues 9 to 12 (RRDY) and Lys-69 each bind substrate. FMN contacts are provided by residues 64–69 (RVLLLK), 79–80 (FT), Lys-86, and Gln-108. Substrate contacts are provided by Tyr-126, Arg-130, and Ser-134. FMN-binding positions include 143 to 144 (QS) and Trp-188. 194–196 (RLH) serves as a coordination point for substrate. Arg-198 serves as a coordination point for FMN.

It belongs to the pyridoxamine 5'-phosphate oxidase family. In terms of assembly, homodimer. FMN serves as cofactor.

The enzyme catalyses pyridoxamine 5'-phosphate + O2 + H2O = pyridoxal 5'-phosphate + H2O2 + NH4(+). It catalyses the reaction pyridoxine 5'-phosphate + O2 = pyridoxal 5'-phosphate + H2O2. The protein operates within cofactor metabolism; pyridoxal 5'-phosphate salvage; pyridoxal 5'-phosphate from pyridoxamine 5'-phosphate: step 1/1. Its pathway is cofactor metabolism; pyridoxal 5'-phosphate salvage; pyridoxal 5'-phosphate from pyridoxine 5'-phosphate: step 1/1. In terms of biological role, catalyzes the oxidation of either pyridoxine 5'-phosphate (PNP) or pyridoxamine 5'-phosphate (PMP) into pyridoxal 5'-phosphate (PLP). The sequence is that of Pyridoxine/pyridoxamine 5'-phosphate oxidase from Pseudomonas syringae pv. tomato (strain ATCC BAA-871 / DC3000).